The following is a 46-amino-acid chain: uncharacterized protein (46 aa).

The helical transmembrane segment at 20 to 42 (MAMIWVVAALVIALVVGTALNYI) threads the bilayer.

It is found in the membrane. This is an uncharacterized protein from Bacillus subtilis (strain 168).